The chain runs to 187 residues: Ion-translocating oxidoreductase complex subunit B (187 aa).

The interval 1 to 26 is hydrophobic; that stretch reads MTHILFAVLVLALLALAFGIILGFAA. Residues 32–90 form the 4Fe-4S domain; it reads EADPIVDQLDALLPQTQCGQCGYPGCKPYAEALANGDQINKCVPGGDATMRKIADLMGV. [4Fe-4S] cluster-binding residues include cysteine 49, cysteine 52, cysteine 57, cysteine 73, cysteine 115, cysteine 118, cysteine 121, cysteine 125, cysteine 145, cysteine 148, cysteine 151, and cysteine 155. 4Fe-4S ferredoxin-type domains lie at 106–135 and 136–165; these read KVAFIHEDQCIGCTKCIQACPVDAIVGATK and AMHTVITDECTGCDLCVDPCPTDCIEMIPV.

The protein belongs to the 4Fe4S bacterial-type ferredoxin family. RnfB subfamily. The complex is composed of six subunits: RnfA, RnfB, RnfC, RnfD, RnfE and RnfG. Requires [4Fe-4S] cluster as cofactor.

It localises to the cell inner membrane. In terms of biological role, part of a membrane-bound complex that couples electron transfer with translocation of ions across the membrane. This is Ion-translocating oxidoreductase complex subunit B from Aeromonas salmonicida (strain A449).